Reading from the N-terminus, the 125-residue chain is Large ribosomal subunit protein bL12 (125 aa).

It belongs to the bacterial ribosomal protein bL12 family. Homodimer. Part of the ribosomal stalk of the 50S ribosomal subunit. Forms a multimeric L10(L12)X complex, where L10 forms an elongated spine to which 2 to 4 L12 dimers bind in a sequential fashion. Binds GTP-bound translation factors.

Forms part of the ribosomal stalk which helps the ribosome interact with GTP-bound translation factors. Is thus essential for accurate translation. In Heliobacterium modesticaldum (strain ATCC 51547 / Ice1), this protein is Large ribosomal subunit protein bL12.